We begin with the raw amino-acid sequence, 389 residues long: Ankyrin repeat domain-containing protein 42 (389 aa).

Residues 1 to 21 are disordered; it reads MPGVANSGPSTSSRETANPCS. Positions 7 to 19 are enriched in polar residues; the sequence is SGPSTSSRETANP. 9 ANK repeats span residues 25 to 60, 64 to 93, 97 to 126, 130 to 159, 163 to 192, 200 to 232, 235 to 265, 269 to 298, and 302 to 332; these read VHFGSIHDAVRAGDVKQLSEIVCLHWLLWHGADITH, RGWTASHIAAIRGQDACVQALIMNGANLTA, RGCTPLHLAATHGHSFTLQIMLRSGVDPSV, REWRPVHYAAFHGRLGCLQLLVKWGCSIED, NGNLPVHLAAMEGHLHCFKFLVSRMSSATQ, NGENVLDLAQRFFKQNILQFIQGAEYEGKDLED, TLAFPGHVAAFKGDLGMLKKLVEDGVININE, NGSTPMHKAAGQGHIECLQWLIKMGADSNI, and AGERPSDVAKRFAHLAAVKLLEELQKYDIDD.

The protein is Ankyrin repeat domain-containing protein 42 (ANKRD42) of Homo sapiens (Human).